The primary structure comprises 186 residues: Adenine phosphoribosyltransferase (186 aa).

The protein belongs to the purine/pyrimidine phosphoribosyltransferase family. In terms of assembly, homodimer.

The protein resides in the cytoplasm. The catalysed reaction is AMP + diphosphate = 5-phospho-alpha-D-ribose 1-diphosphate + adenine. The protein operates within purine metabolism; AMP biosynthesis via salvage pathway; AMP from adenine: step 1/1. In terms of biological role, catalyzes a salvage reaction resulting in the formation of AMP, that is energically less costly than de novo synthesis. The chain is Adenine phosphoribosyltransferase from Xanthomonas oryzae pv. oryzae (strain MAFF 311018).